We begin with the raw amino-acid sequence, 1034 residues long: Ubiquitin-like-specific protease 2 (1034 aa).

6 disordered regions span residues 1-42, 71-110, 388-419, 731-800, 841-960, and 983-1034; these read MSAR…FRKD, IELS…HSSL, SHAV…DDAT, IDQS…PIRH, GVSS…DSLG, and SSPT…DEDP. A compositionally biased stretch (low complexity) spans 19–33; sequence SSRASSPRSSASLPP. The segment covering 74–85 has biased composition (acidic residues); sequence SDNDVDNNDEGE. The segment covering 743–756 has biased composition (low complexity); that stretch reads TSEPPCSRSSSIST. Residue Ser788 is modified to Phosphoserine. 3 stretches are compositionally biased toward polar residues: residues 845-856, 876-904, and 912-923; these read PIKNDQALSSTH, QLSS…VISD, and GVNSESKNTSGI. At Ser903 the chain carries Phosphoserine. Ser983 and Ser984 each carry phosphoserine. The segment covering 992–1017 has biased composition (polar residues); the sequence is TSATSKGSNAQLLSNYGDENNQSQDS.

Belongs to the peptidase C48 family.

Insertion mutation in SMT4 confers temperature and benomyl sensitivity; high copy suppressor of a temperature sensitive mutation in MIF2. The sequence is that of Ubiquitin-like-specific protease 2 (ULP2) from Saccharomyces cerevisiae (strain ATCC 204508 / S288c) (Baker's yeast).